Consider the following 188-residue polypeptide: Putative manganese efflux pump MntP (188 aa).

6 consecutive transmembrane segments (helical) span residues 8 to 28 (CLGLGLAADAFAVSLSSGFVI), 39 to 59 (IALFFGIFQAIMPLIGWLTGL), 68 to 88 (IDHWIAFILLLGIGSKMIYEA), 106 to 126 (LLALAIATSIDALAAGLGLSL), 131 to 151 (ILLPCTLIGLITFVLSFIGVF), and 164 to 184 (IEIIGGLTLIIIGSKILIEDL).

Belongs to the MntP (TC 9.B.29) family.

It is found in the cell inner membrane. In terms of biological role, probably functions as a manganese efflux pump. The polypeptide is Putative manganese efflux pump MntP (Crocosphaera subtropica (strain ATCC 51142 / BH68) (Cyanothece sp. (strain ATCC 51142))).